Reading from the N-terminus, the 516-residue chain is 3-phosphoshikimate 1-carboxyvinyltransferase, chloroplastic (516 aa).

A chloroplast-targeting transit peptide spans 1–72 (MAQSSRICHG…KVTASVSTSE (72 aa)). Residues lysine 95, serine 96, and arginine 100 each contribute to the 3-phosphoshikimate site. Lysine 95 is a binding site for phosphoenolpyruvate. Residues glycine 173 and arginine 203 each contribute to the phosphoenolpyruvate site. Serine 250, serine 251, glutamine 252, serine 278, aspartate 403, and lysine 430 together coordinate 3-phosphoshikimate. Glutamine 252 is a binding site for phosphoenolpyruvate. Residue aspartate 403 is the Proton acceptor of the active site. Arginine 434, arginine 476, and lysine 501 together coordinate phosphoenolpyruvate.

The protein belongs to the EPSP synthase family.

It is found in the plastid. The protein localises to the chloroplast. The catalysed reaction is 3-phosphoshikimate + phosphoenolpyruvate = 5-O-(1-carboxyvinyl)-3-phosphoshikimate + phosphate. It participates in metabolic intermediate biosynthesis; chorismate biosynthesis; chorismate from D-erythrose 4-phosphate and phosphoenolpyruvate: step 6/7. Its function is as follows. Catalyzes the transfer of the enolpyruvyl moiety of phosphoenolpyruvate (PEP) to the 5-hydroxyl of shikimate-3-phosphate (S3P) to produce enolpyruvyl shikimate-3-phosphate and inorganic phosphate. The protein is 3-phosphoshikimate 1-carboxyvinyltransferase, chloroplastic of Brassica napus (Rape).